The following is a 228-amino-acid chain: Protein N-lysine methyltransferase METTL21D (228 aa).

An N-acetylalanine modification is found at Ala-2. S-adenosyl-L-methionine-binding positions include Trp-43, 75–77 (GSG), Asp-96, Trp-126, Ala-142, and Tyr-147.

The protein belongs to the methyltransferase superfamily. METTL21 family. As to quaternary structure, interacts with ALKBH6. Interacts with ASPSCR1 and UBXN6; interaction with ASPSCR1, but not with UBXN6, enhances VCP methylation. As to expression, widely expressed.

The protein resides in the cytoplasm. The catalysed reaction is L-lysyl-[protein] + 3 S-adenosyl-L-methionine = N(6),N(6),N(6)-trimethyl-L-lysyl-[protein] + 3 S-adenosyl-L-homocysteine + 3 H(+). Its function is as follows. Protein N-lysine methyltransferase that specifically trimethylates 'Lys-315' of VCP/p97; this modification may decrease VCP ATPase activity. This Mus musculus (Mouse) protein is Protein N-lysine methyltransferase METTL21D (Vcpkmt).